The sequence spans 478 residues: PRAME family member 4 (478 aa).

An LRR 1; degenerate repeat occupies 99-126 (RWKLQVLDLQDVCENFWMVWSEAMAHGC). An LRR 2; degenerate repeat occupies 181 to 205 (HLCCKKLKILGMPFRNIRSILKMVN). An LRR 3; degenerate repeat occupies 206–232 (LDCIQEVEVNCKWVLPILTQFTPYLGH). An LRR 4; degenerate repeat occupies 233 to 268 (MRNLQKLILSHMDVSRYVSPEQKKEIVTQFTTQFLK). LRR repeat units follow at residues 269–294 (LRCLQKLYMNSVSFLEGHLDQLLSCL), 295–326 (KTSLKFLTITNCVLLESDLKHLSQCPSISQLK), 327–347 (TLDLSGIRLTNYSLVPLQILL), 351–378 (AATLEYLDLDDCGIIDSQVNAILPALSR), and 379–403 (CFELNTFSFCGNPICMATLENLLSH).

Belongs to the PRAME family.

The sequence is that of PRAME family member 4 from Homo sapiens (Human).